A 208-amino-acid polypeptide reads, in one-letter code: Holliday junction resolvase RecU (208 aa).

A disordered region spans residues 1–28 (MNYPNGKPYSKNKPLDGRKSSPFSSNIE). Residues Thr-87, Asp-89, Glu-102, and Gln-121 each contribute to the Mg(2+) site.

The protein belongs to the RecU family. It depends on Mg(2+) as a cofactor.

It localises to the cytoplasm. The catalysed reaction is Endonucleolytic cleavage at a junction such as a reciprocal single-stranded crossover between two homologous DNA duplexes (Holliday junction).. In terms of biological role, endonuclease that resolves Holliday junction intermediates in genetic recombination. Cleaves mobile four-strand junctions by introducing symmetrical nicks in paired strands. Promotes annealing of linear ssDNA with homologous dsDNA. Required for DNA repair, homologous recombination and chromosome segregation. In Staphylococcus epidermidis (strain ATCC 12228 / FDA PCI 1200), this protein is Holliday junction resolvase RecU.